The primary structure comprises 20 residues: Haemoporin (20 aa).

Positions 1–20 (AAVPEAAAEATAEAAPVSEF) are disordered.

In terms of assembly, homopentamer. Forms a cylindrical structure with a central pore. In terms of tissue distribution, detected in the hemolymph.

Its subcellular location is the secreted. The polypeptide is Haemoporin (Aplysia californica (California sea hare)).